Reading from the N-terminus, the 426-residue chain is Serine--tRNA ligase (426 aa).

Residue 231–233 coordinates L-serine; sequence TAE. ATP contacts are provided by residues 262-264 and Val-278; that span reads RRE. Glu-285 contributes to the L-serine binding site. An ATP-binding site is contributed by 349–352; it reads EVSS. Ser-384 is a binding site for L-serine.

It belongs to the class-II aminoacyl-tRNA synthetase family. Type-1 seryl-tRNA synthetase subfamily. In terms of assembly, homodimer. The tRNA molecule binds across the dimer.

It localises to the cytoplasm. It catalyses the reaction tRNA(Ser) + L-serine + ATP = L-seryl-tRNA(Ser) + AMP + diphosphate + H(+). The enzyme catalyses tRNA(Sec) + L-serine + ATP = L-seryl-tRNA(Sec) + AMP + diphosphate + H(+). The protein operates within aminoacyl-tRNA biosynthesis; selenocysteinyl-tRNA(Sec) biosynthesis; L-seryl-tRNA(Sec) from L-serine and tRNA(Sec): step 1/1. Catalyzes the attachment of serine to tRNA(Ser). Is also able to aminoacylate tRNA(Sec) with serine, to form the misacylated tRNA L-seryl-tRNA(Sec), which will be further converted into selenocysteinyl-tRNA(Sec). This chain is Serine--tRNA ligase, found in Chlamydia felis (strain Fe/C-56) (Chlamydophila felis).